Here is a 1385-residue protein sequence, read N- to C-terminus: Kinesin-like protein KIF15 (1385 aa).

A disordered region spans residues 1–24 (MAPGCKSELRNVTNSHSNQPSNED). The segment covering 10–21 (RNVTNSHSNQPS) has biased composition (polar residues). The region spanning 26 to 363 (AIKVFVRIRP…LNFAQRAKLI (338 aa)) is the Kinesin motor domain. Residue 109-116 (GQTGSGKT) participates in ATP binding. Positions 368 to 1385 (VVNEDTQGNV…NVFLKERKKE (1018 aa)) form a coiled coil. An N6-acetyllysine modification is found at lysine 1007. A phosphoserine mark is found at serine 1139 and serine 1167. Residues 1222 to 1243 (DMKRQGESSSQSRPDSQQLKNE) form a disordered region. Over residues 1228 to 1241 (ESSSQSRPDSQQLK) the composition is skewed to polar residues.

The protein belongs to the TRAFAC class myosin-kinesin ATPase superfamily. Kinesin family. KLP2 subfamily. Interacts with MKI67 and TPX2. In terms of tissue distribution, expressed in sympathetic neurons.

It localises to the cytoplasm. The protein localises to the cytoskeleton. Its subcellular location is the spindle. Its function is as follows. Plus-end directed kinesin-like motor enzyme involved in mitotic spindle assembly. This Rattus norvegicus (Rat) protein is Kinesin-like protein KIF15 (Kif15).